A 478-amino-acid chain; its full sequence is Allene oxide synthase 2 (478 aa).

Heme b contacts are provided by Lys88, His119, and Lys123. A (13S)-hydroperoxy-(9Z,11E,15Z)-octadecatrienoate-binding site is contributed by Asn278. Lys427 and Cys429 together coordinate heme b.

Belongs to the cytochrome P450 family. Heme b is required as a cofactor. As to expression, weakly expressed in roots, shoots, leaves and flowers.

The enzyme catalyses (13S)-hydroperoxy-(9Z,11E,15Z)-octadecatrienoate = (9Z,13S,15Z)-12,13-epoxyoctadeca-9,11,15-trienoate + H2O. The protein operates within lipid metabolism; oxylipin biosynthesis. Functionally, involved in the biosynthesis of jasmonic acid, a growth regulator that is implicated also as a signaling molecule in plant defense. Converts 13-hydroperoxylinolenic acid to 12,13-epoxylinolenic acid. The polypeptide is Allene oxide synthase 2 (CYP74A2) (Oryza sativa subsp. japonica (Rice)).